Here is a 308-residue protein sequence, read N- to C-terminus: Putative ankyrin repeat protein R835 (308 aa).

ANK repeat units follow at residues 100–129 (DINE…NIDL), 152–181 (PMNK…YVDF), 190–217 (SEYT…GANY), 218–247 (KSSY…DLEK), 249–277 (GLRS…EIDY), and 279–305 (YYIY…SKQI).

The protein is Putative ankyrin repeat protein R835 of Acanthamoeba polyphaga (Amoeba).